The primary structure comprises 83 residues: Small ribosomal subunit protein bS16 (83 aa).

It belongs to the bacterial ribosomal protein bS16 family.

The polypeptide is Small ribosomal subunit protein bS16 (Thermosynechococcus vestitus (strain NIES-2133 / IAM M-273 / BP-1)).